Here is a 436-residue protein sequence, read N- to C-terminus: DEAD-box ATP-dependent RNA helicase CshB (436 aa).

A Q motif motif is present at residues 4–32 (QTFTQYDFKPFLIDAVRELRFTEPTGIQQ). In terms of domain architecture, Helicase ATP-binding spans 35–209 (FPVVKKGVSV…KKYMENPEHI (175 aa)). 48 to 55 (SQTGSGKT) is an ATP binding site. The short motif at 157–160 (DEAD) is the DEAD box element. Residues 240-388 (MLLQFKPYLA…WADLGERRRR (149 aa)) form the Helicase C-terminal domain. The tract at residues 385–436 (RRRRKSRKKPNDELDVMATKVIKKPKKVKPNYKRKLATERDKVKRKYSNKKR) is disordered. Composition is skewed to basic residues over residues 405-419 (VIKK…YKRK) and 427-436 (VKRKYSNKKR).

Belongs to the DEAD box helicase family. CshB subfamily.

The protein localises to the cytoplasm. The catalysed reaction is ATP + H2O = ADP + phosphate + H(+). In terms of biological role, probable DEAD-box RNA helicase. May work in conjunction with the cold shock proteins to ensure proper initiation of transcription at low and optimal temperatures. Unwinds dsRNA in both 5'- and 3'-directions and shows RNA-dependent ATPase activity. Probably has a somewhat redundant function with CshA, as cshA can partially complement the growth effects of a cshB deletion. The polypeptide is DEAD-box ATP-dependent RNA helicase CshB (Bacillus cereus (strain ATCC 14579 / DSM 31 / CCUG 7414 / JCM 2152 / NBRC 15305 / NCIMB 9373 / NCTC 2599 / NRRL B-3711)).